A 458-amino-acid chain; its full sequence is Light-independent protochlorophyllide reductase subunit N (458 aa).

3 residues coordinate [4Fe-4S] cluster: Cys-20, Cys-45, and Cys-105.

The protein belongs to the BchN/ChlN family. Protochlorophyllide reductase is composed of three subunits; ChlL, ChlN and ChlB. Forms a heterotetramer of two ChlB and two ChlN subunits. Requires [4Fe-4S] cluster as cofactor.

It localises to the plastid. The protein localises to the chloroplast. The enzyme catalyses chlorophyllide a + oxidized 2[4Fe-4S]-[ferredoxin] + 2 ADP + 2 phosphate = protochlorophyllide a + reduced 2[4Fe-4S]-[ferredoxin] + 2 ATP + 2 H2O. It participates in porphyrin-containing compound metabolism; chlorophyll biosynthesis (light-independent). In terms of biological role, component of the dark-operative protochlorophyllide reductase (DPOR) that uses Mg-ATP and reduced ferredoxin to reduce ring D of protochlorophyllide (Pchlide) to form chlorophyllide a (Chlide). This reaction is light-independent. The NB-protein (ChlN-ChlB) is the catalytic component of the complex. This Angiopteris evecta (Mule's foot fern) protein is Light-independent protochlorophyllide reductase subunit N.